Consider the following 146-residue polypeptide: Hemoglobin subunit beta (146 aa).

Residue valine 1 is modified to N-acetylvaline. The region spanning 2-146 (HLTGEEKSAV…VANALAHKYH (145 aa)) is the Globin domain. Threonine 12 is modified (phosphothreonine). Serine 44 is subject to Phosphoserine. Position 59 is an N6-acetyllysine (lysine 59). Position 63 (histidine 63) interacts with heme b. Lysine 82 bears the N6-acetyllysine mark. A heme b-binding site is contributed by histidine 92. Residue cysteine 93 is modified to S-nitrosocysteine. At lysine 144 the chain carries N6-acetyllysine.

The protein belongs to the globin family. Heterotetramer of two alpha chains and two beta chains. In terms of tissue distribution, red blood cells.

Functionally, involved in oxygen transport from the lung to the various peripheral tissues. In Loris tardigradus (Slender loris), this protein is Hemoglobin subunit beta (HBB).